The chain runs to 115 residues: uncharacterized protein (115 aa).

In terms of domain architecture, HTH arsR-type spans 1-91; it reads MTEYNANSIR…SELEGFKNVS (91 aa). The H-T-H motif DNA-binding region spans 30-53; that stretch reads ASLISHTLLLSYATVLRHLRILND.

In terms of biological role, essential for virus function. This is an uncharacterized protein from Saccharolobus solfataricus (Sulfolobus solfataricus).